Reading from the N-terminus, the 99-residue chain is NADH-quinone oxidoreductase subunit K (99 aa).

Helical transmembrane passes span 3 to 23 (PTYYLLLSALLFSIGAVGVLV), 28 to 48 (IVVFMCVELMLNAVNLTLVTF), and 59 to 79 (VMAFFVMVVAAAEVVVGLAII).

Belongs to the complex I subunit 4L family. As to quaternary structure, NDH-1 is composed of 14 different subunits. Subunits NuoA, H, J, K, L, M, N constitute the membrane sector of the complex.

Its subcellular location is the cell membrane. It catalyses the reaction a quinone + NADH + 5 H(+)(in) = a quinol + NAD(+) + 4 H(+)(out). Its function is as follows. NDH-1 shuttles electrons from NADH, via FMN and iron-sulfur (Fe-S) centers, to quinones in the respiratory chain. The immediate electron acceptor for the enzyme in this species is believed to be a menaquinone. Couples the redox reaction to proton translocation (for every two electrons transferred, four hydrogen ions are translocated across the cytoplasmic membrane), and thus conserves the redox energy in a proton gradient. The protein is NADH-quinone oxidoreductase subunit K of Saccharopolyspora erythraea (strain ATCC 11635 / DSM 40517 / JCM 4748 / NBRC 13426 / NCIMB 8594 / NRRL 2338).